Reading from the N-terminus, the 426-residue chain is Enolase (426 aa).

Glutamine 163 is a (2R)-2-phosphoglycerate binding site. Catalysis depends on glutamate 205, which acts as the Proton donor. Mg(2+) is bound by residues aspartate 242, glutamate 283, and aspartate 310. Residues lysine 335, arginine 364, serine 365, and lysine 386 each contribute to the (2R)-2-phosphoglycerate site. The active-site Proton acceptor is lysine 335.

This sequence belongs to the enolase family. The cofactor is Mg(2+).

The protein localises to the cytoplasm. Its subcellular location is the secreted. It localises to the cell surface. The enzyme catalyses (2R)-2-phosphoglycerate = phosphoenolpyruvate + H2O. The protein operates within carbohydrate degradation; glycolysis; pyruvate from D-glyceraldehyde 3-phosphate: step 4/5. Its function is as follows. Catalyzes the reversible conversion of 2-phosphoglycerate (2-PG) into phosphoenolpyruvate (PEP). It is essential for the degradation of carbohydrates via glycolysis. In Aquifex aeolicus (strain VF5), this protein is Enolase.